We begin with the raw amino-acid sequence, 221 residues long: Urease accessory protein UreF (221 aa).

The protein belongs to the UreF family. As to quaternary structure, ureD, UreF and UreG form a complex that acts as a GTP-hydrolysis-dependent molecular chaperone, activating the urease apoprotein by helping to assemble the nickel containing metallocenter of UreC. The UreE protein probably delivers the nickel.

The protein localises to the cytoplasm. Its function is as follows. Required for maturation of urease via the functional incorporation of the urease nickel metallocenter. The polypeptide is Urease accessory protein UreF (Teredinibacter turnerae (strain ATCC 39867 / T7901)).